The sequence spans 1647 residues: MAP kinase-activating death domain protein (1647 aa).

Residues 14–268 enclose the uDENN domain; sequence YLVIVGARHP…VPVSGQKRVD (255 aa). Over residues 108–122 the composition is skewed to basic and acidic residues; it reads EKGEGGAGSRGKEGT. Residues 108-168 form a disordered region; it reads EKGEGGAGSR…GKRRAKAGSR (61 aa). A compositionally biased stretch (low complexity) spans 128-141; it reads SEEGGTESSESGSS. The segment covering 142 to 157 has biased composition (polar residues); the sequence is LQPLSADSTPDVNQSP. Phosphoserine is present on Ser-156. Residues 158-167 show a composition bias toward basic residues; sequence RGKRRAKAGS. Residues 289–429 form the cDENN domain; it reads RFTLVDFPLH…ESLELKKHLK (141 aa). Residues 431–565 enclose the dDENN domain; the sequence is ALASMSLNTQ…LNPTNYAFQR (135 aa). Disordered regions lie at residues 604-636 and 678-842; these read ALSVPPERDSDSEPTDDSGSDSMDYDDSSSSYS and NQKE…STEG. Over residues 615–630 the composition is skewed to acidic residues; the sequence is SEPTDDSGSDSMDYDD. A phosphoserine mark is found at Ser-689 and Ser-692. Over residues 689 to 699 the composition is skewed to polar residues; the sequence is SENSQENPPLR. The segment covering 700–712 has biased composition (low complexity); sequence SSSSTTASSSPST. The segment covering 750–768 has biased composition (basic and acidic residues); it reads NVDRRQAEIGEGSVRRRIY. Residues 790–804 show a composition bias toward polar residues; it reads ESYTPRFSQHVSGNR. Phosphoserine occurs at positions 813, 818, and 820. Low complexity predominate over residues 827–840; that stretch reads RASSPNSTVSNTST. Ser-858, Ser-862, Ser-916, Ser-921, and Ser-930 each carry phosphoserine. Disordered stretches follow at residues 913 to 941, 1051 to 1110, and 1146 to 1243; these read QKSSVIKHSPTVKREPPSPQGRSSNSSEN, KEPD…DTRS, and VFDL…DSEI. Positions 932 to 941 are enriched in polar residues; that stretch reads QGRSSNSSEN. Ser-1059 is modified (phosphoserine). Phosphothreonine occurs at positions 1061 and 1066. Phosphoserine is present on Ser-1110. 3 stretches are compositionally biased toward polar residues: residues 1158 to 1173, 1189 to 1207, and 1234 to 1243; these read QISADSGVSLTSSSQR, RSSSQDSEVSTVVSNSSGE, and SRGTLSDSEI. Thr-1237 is subject to Phosphothreonine. Ser-1239 and Ser-1270 each carry phosphoserine. In terms of domain architecture, Death spans 1340–1415; it reads GMDQGPQEMI…GLVYSQQINE (76 aa).

This sequence belongs to the MADD family. As to quaternary structure, interacts (via death domain) with TNFRSF1A (via death domain). Interacts with PIDD1. Interacts with YWHAZ. Interacts (via death domain) with KIF1B; links the motor KIF1B to Rab3-carrying vesicles in anterograde synaptic vesicle transport. Interacts with KIF1A. Interacts (via uDENN domain) with RAB3A, RAB3B, RAB3C and RAB3D; the GTP-bound form of the Rab proteins is preferred for interaction. As to expression, expressed in testis, ovary, brain and heart. Expressed in spleen, thymus, prostate, testis, ovary, small instestine and colon. Expressed in liver. Not detected in the brain, breast, kidney, lung, ovary, pancreas, testis, uterus, stomach and thyroid. In terms of tissue distribution, expressed in the brain, breast, kidney, lung, ovary, pancreas, testis, uterus, stomach and thyroid.

It is found in the cell membrane. Its subcellular location is the cytoplasm. The protein resides in the cell projection. It localises to the axon. Its function is as follows. Guanyl-nucleotide exchange factor that regulates small GTPases of the Rab family. Converts GDP-bound inactive form of RAB27A and RAB27B to the GTP-bound active forms. Converts GDP-bound inactive form of RAB3A, RAB3C and RAB3D to the GTP-bound active forms, GTPases involved in synaptic vesicle exocytosis and vesicle secretion. Plays a role in synaptic vesicle formation and in vesicle trafficking at the neuromuscular junction. Involved in up-regulating a post-docking step of synaptic exocytosis in central synapses. Probably by binding to the motor proteins KIF1B and KIF1A, mediates motor-dependent transport of GTP-RAB3A-positive vesicles to the presynaptic nerve terminals. Plays a role in TNFA-mediated activation of the MAPK pathway, including ERK1/2. May link TNFRSF1A with MAP kinase activation. May be involved in the regulation of TNFA-induced apoptosis. In Homo sapiens (Human), this protein is MAP kinase-activating death domain protein.